A 314-amino-acid polypeptide reads, in one-letter code: Hydroxyacyl-coenzyme A dehydrogenase, mitochondrial (314 aa).

The N-terminal 12 residues, 1 to 12, are a transit peptide targeting the mitochondrion; the sequence is MAFVTRQFMRSV. NAD(+) is bound by residues 34 to 39 and D57; that span reads GGGLMG. CoA-binding residues include S73 and K80. The residue at position 80 (K80) is an N6-succinyllysine. Residues K81 and K87 each carry the N6-acetyllysine; alternate modification. An N6-succinyllysine; alternate mark is found at K81 and K87. Position 122 (E122) interacts with NAD(+). K125 carries the N6-acetyllysine modification. NAD(+) is bound at residue K127. The residue at position 127 (K127) is an N6-(2-hydroxyisobutyryl)lysine. At K136 the chain carries N6-acetyllysine; alternate. N6-succinyllysine; alternate is present on K136. NAD(+)-binding residues include S149 and N173. A CoA-binding site is contributed by S149. The residue at position 179 (K179) is an N6-acetyllysine. 3 positions are modified to N6-acetyllysine; alternate: K185, K192, and K202. N6-succinyllysine; alternate occurs at positions 185, 192, and 202. K206 is subject to N6-succinyllysine. K212 and K241 each carry N6-acetyllysine; alternate. K212 and K241 each carry N6-succinyllysine; alternate. K305 provides a ligand contact to NAD(+). Residue K312 is modified to N6-acetyllysine; alternate. At K312 the chain carries N6-succinyllysine; alternate.

Belongs to the 3-hydroxyacyl-CoA dehydrogenase family. Homodimer. Interacts with GLUD1; this interaction inhibits the activation of glutamate dehydrogenase 1 (GLUD1). In terms of processing, succinylation at Lys-81, adjacent to a coenzyme A binding site. Desuccinylated by SIRT5. In terms of tissue distribution, expressed in liver, kidney, pancreas, heart and skeletal muscle.

Its subcellular location is the mitochondrion matrix. It carries out the reaction a (3S)-3-hydroxyacyl-CoA + NAD(+) = a 3-oxoacyl-CoA + NADH + H(+). The catalysed reaction is (3S)-3-hydroxybutanoyl-CoA + NAD(+) = acetoacetyl-CoA + NADH + H(+). It catalyses the reaction (3S)-hydroxydecanoyl-CoA + NAD(+) = 3-oxodecanoyl-CoA + NADH + H(+). The enzyme catalyses (3S)-hydroxyhexadecanoyl-CoA + NAD(+) = 3-oxohexadecanoyl-CoA + NADH + H(+). It participates in lipid metabolism; fatty acid beta-oxidation. In terms of biological role, mitochondrial fatty acid beta-oxidation enzyme that catalyzes the third step of the beta-oxidation cycle for medium and short-chain 3-hydroxy fatty acyl-CoAs (C4 to C10). Plays a role in the control of insulin secretion by inhibiting the activation of glutamate dehydrogenase 1 (GLUD1), an enzyme that has an important role in regulating amino acid-induced insulin secretion. Plays a role in the maintenance of normal spermatogenesis through the reduction of fatty acid accumulation in the testes. In Homo sapiens (Human), this protein is Hydroxyacyl-coenzyme A dehydrogenase, mitochondrial (HADH).